The sequence spans 448 residues: Cytoplasmic tRNA 2-thiolation protein 2 (448 aa).

It belongs to the CTU2/NCS2 family.

The protein localises to the cytoplasm. Its pathway is tRNA modification; 5-methoxycarbonylmethyl-2-thiouridine-tRNA biosynthesis. Plays a central role in 2-thiolation of mcm(5)S(2)U at tRNA wobble positions of tRNA(Lys), tRNA(Glu) and tRNA(Gln). May act by forming a heterodimer with NCS6 that ligates sulfur from thiocarboxylated URM1 onto the uridine of tRNAs at wobble position. Prior mcm(5) tRNA modification by the elongator complex is required for 2-thiolation. May also be involved in protein urmylation. This chain is Cytoplasmic tRNA 2-thiolation protein 2, found in Lodderomyces elongisporus (strain ATCC 11503 / CBS 2605 / JCM 1781 / NBRC 1676 / NRRL YB-4239) (Yeast).